Here is a 502-residue protein sequence, read N- to C-terminus: ATP synthase subunit alpha (502 aa).

A disordered region spans residues 115 to 137 (VDGLGPVETTETRPIESPAPGVM). Position 169-176 (169-176 (GDRQTGKT)) interacts with ATP.

This sequence belongs to the ATPase alpha/beta chains family. In terms of assembly, F-type ATPases have 2 components, CF(1) - the catalytic core - and CF(0) - the membrane proton channel. CF(1) has five subunits: alpha(3), beta(3), gamma(1), delta(1), epsilon(1). CF(0) has three main subunits: a(1), b(2) and c(9-12). The alpha and beta chains form an alternating ring which encloses part of the gamma chain. CF(1) is attached to CF(0) by a central stalk formed by the gamma and epsilon chains, while a peripheral stalk is formed by the delta and b chains.

The protein localises to the cell membrane. The enzyme catalyses ATP + H2O + 4 H(+)(in) = ADP + phosphate + 5 H(+)(out). Produces ATP from ADP in the presence of a proton gradient across the membrane. The alpha chain is a regulatory subunit. The polypeptide is ATP synthase subunit alpha (Geobacillus stearothermophilus (Bacillus stearothermophilus)).